Reading from the N-terminus, the 489-residue chain is Aspartyl/glutamyl-tRNA(Asn/Gln) amidotransferase subunit B (489 aa).

Belongs to the GatB/GatE family. GatB subfamily. Heterotrimer of A, B and C subunits.

It catalyses the reaction L-glutamyl-tRNA(Gln) + L-glutamine + ATP + H2O = L-glutaminyl-tRNA(Gln) + L-glutamate + ADP + phosphate + H(+). It carries out the reaction L-aspartyl-tRNA(Asn) + L-glutamine + ATP + H2O = L-asparaginyl-tRNA(Asn) + L-glutamate + ADP + phosphate + 2 H(+). Allows the formation of correctly charged Asn-tRNA(Asn) or Gln-tRNA(Gln) through the transamidation of misacylated Asp-tRNA(Asn) or Glu-tRNA(Gln) in organisms which lack either or both of asparaginyl-tRNA or glutaminyl-tRNA synthetases. The reaction takes place in the presence of glutamine and ATP through an activated phospho-Asp-tRNA(Asn) or phospho-Glu-tRNA(Gln). In Polynucleobacter asymbioticus (strain DSM 18221 / CIP 109841 / QLW-P1DMWA-1) (Polynucleobacter necessarius subsp. asymbioticus), this protein is Aspartyl/glutamyl-tRNA(Asn/Gln) amidotransferase subunit B.